A 316-amino-acid polypeptide reads, in one-letter code: Acetaldehyde dehydrogenase (316 aa).

NAD(+) is bound at residue 11 to 14 (SGNI). C131 serves as the catalytic Acyl-thioester intermediate. NAD(+)-binding positions include 162-170 (SAGPGTRAN) and N289.

The protein belongs to the acetaldehyde dehydrogenase family. As to quaternary structure, interacts with MhpE.

The enzyme catalyses acetaldehyde + NAD(+) + CoA = acetyl-CoA + NADH + H(+). The protein operates within aromatic compound metabolism; 3-phenylpropanoate degradation. Its function is as follows. Catalyzes the conversion of acetaldehyde to acetyl-CoA, using NAD(+) and coenzyme A. Is the final enzyme in the meta-cleavage pathway for the degradation of aromatic compounds. The protein is Acetaldehyde dehydrogenase of Escherichia coli O157:H7.